A 34-amino-acid chain; its full sequence is ECRWYLGGCKEDSECCEHLQCHSYWEWCLWDGSF.

Cystine bridges form between cysteine 2–cysteine 16, cysteine 9–cysteine 21, and cysteine 15–cysteine 28. Phenylalanine amide is present on phenylalanine 34.

The protein belongs to the neurotoxin 10 (Hwtx-1) family. 62 (Vatx) subfamily. As to expression, expressed by the venom gland.

The protein resides in the secreted. Selectively activates mammalian TRPV1, or capsaicin receptor, a non-selective cation channel expressed by sensory neurons of the pain pathway. Is more potent than VaTx1 and VaTx2. Interacts with distinct regions of the channel than capsaicin, since it only acts on the extracellular face of the channel, and capsaicin binds to the cytosolic side. Also activates avian TRPV1, which is insensitive to capsaicin. In mice, elicits pain-related behaviors, such as licking and flinching of the affected limb. The paw of toxin-injected mice shows substantial edema. The protein is Tau-theraphotoxin-Pc1c of Psalmopoeus cambridgei (Trinidad chevron tarantula).